The primary structure comprises 447 residues: Probable 3-deoxy-D-manno-octulosonic acid transferase, mitochondrial (447 aa).

The N-terminal 32 residues, 1–32, are a transit peptide targeting the mitochondrion; the sequence is MKLGVFVYRLYRALTYGVSPLIHLHIRWRRLR. The active-site Proton acceptor is the Glu-66. CMP contacts are provided by residues 278 to 279, 320 to 322, and 347 to 350; these read PR, LGE, and NLSE.

The protein belongs to the glycosyltransferase group 1 family. Glycosyltransferase 30 subfamily. As to expression, expressed in leaves, stems and flowers.

The protein resides in the mitochondrion. The enzyme catalyses lipid IVA (E. coli) + CMP-3-deoxy-beta-D-manno-octulosonate = alpha-Kdo-(2-&gt;6)-lipid IVA (E. coli) + CMP + H(+). It carries out the reaction alpha-Kdo-(2-&gt;6)-lipid IVA (E. coli) + CMP-3-deoxy-beta-D-manno-octulosonate = alpha-Kdo-(2-&gt;4)-alpha-Kdo-(2-&gt;6)-lipid IVA (E. coli) + CMP + H(+). Its pathway is glycolipid biosynthesis; KDO(2)-lipid A biosynthesis; KDO(2)-lipid A from CMP-3-deoxy-D-manno-octulosonate and lipid IV(A): step 1/4. The protein operates within glycolipid biosynthesis; KDO(2)-lipid A biosynthesis; KDO(2)-lipid A from CMP-3-deoxy-D-manno-octulosonate and lipid IV(A): step 2/4. Functionally, involved in the biosynthesis of lipid A, a phosphorylated glycolipid that in bacteria anchors the lipopolysaccharide to the outer membrane of the cell. Catalyzes the transfer of two 3-deoxy-D-manno-octulosonate (Kdo) residues from CMP-Kdo to lipid IV(A), the tetraacyldisaccharide-1,4'-bisphosphate precursor of lipid A. Lipid A-like molecules in plants may serve as structural components of the outer membranes of mitochondria and/or chloroplasts, or may be involved in signal transduction or plant defense responses. In Arabidopsis thaliana (Mouse-ear cress), this protein is Probable 3-deoxy-D-manno-octulosonic acid transferase, mitochondrial (KDTA).